Here is a 249-residue protein sequence, read N- to C-terminus: DNA polymerase sliding clamp 1 (249 aa).

The protein belongs to the PCNA family. In terms of assembly, homotrimer. The subunits circularize to form a toroid; DNA passes through its center. Replication factor C (RFC) is required to load the toroid on the DNA.

Sliding clamp subunit that acts as a moving platform for DNA processing. Responsible for tethering the catalytic subunit of DNA polymerase and other proteins to DNA during high-speed replication. This Pyrobaculum aerophilum (strain ATCC 51768 / DSM 7523 / JCM 9630 / CIP 104966 / NBRC 100827 / IM2) protein is DNA polymerase sliding clamp 1.